We begin with the raw amino-acid sequence, 202 residues long: ATP-dependent Clp protease proteolytic subunit 1 (202 aa).

Serine 102 acts as the Nucleophile in catalysis. Histidine 127 is an active-site residue.

This sequence belongs to the peptidase S14 family. In terms of assembly, fourteen ClpP subunits assemble into 2 heptameric rings which stack back to back to give a disk-like structure with a central cavity, resembling the structure of eukaryotic proteasomes.

The protein localises to the cytoplasm. It catalyses the reaction Hydrolysis of proteins to small peptides in the presence of ATP and magnesium. alpha-casein is the usual test substrate. In the absence of ATP, only oligopeptides shorter than five residues are hydrolyzed (such as succinyl-Leu-Tyr-|-NHMec, and Leu-Tyr-Leu-|-Tyr-Trp, in which cleavage of the -Tyr-|-Leu- and -Tyr-|-Trp bonds also occurs).. Its function is as follows. Cleaves peptides in various proteins in a process that requires ATP hydrolysis. Has a chymotrypsin-like activity. Plays a major role in the degradation of misfolded proteins. The protein is ATP-dependent Clp protease proteolytic subunit 1 of Agrobacterium fabrum (strain C58 / ATCC 33970) (Agrobacterium tumefaciens (strain C58)).